The primary structure comprises 50 residues: Ampulexin 2 (50 aa).

The signal sequence occupies residues 1-26; that stretch reads MKAIMVLFYVMTLTIIGSFSMVSGSP.

Dimer; disulfide-linked. As to expression, expressed in venom sac and, to a lesser extent, in venom gland. Not expressed in brain.

The protein localises to the secreted. Functionally, amphipathic peptide which probably adopts an alpha-helical structure. Has no antimicrobial activity against E.coli DH5alpha or B.thuringiensis. Is not cytotoxic in vitro. In Ampulex compressa (Emerald cockroach wasp), this protein is Ampulexin 2.